The primary structure comprises 64 residues: Large ribosomal subunit protein bL35 (64 aa).

Positions 20 to 42 (GRVKREKMYGSHNLEKKNRKRTR) are disordered. The span at 25–35 (EKMYGSHNLEK) shows a compositional bias: basic and acidic residues.

The protein belongs to the bacterial ribosomal protein bL35 family.

The polypeptide is Large ribosomal subunit protein bL35 (Chlorobium phaeobacteroides (strain BS1)).